Reading from the N-terminus, the 340-residue chain is L-threonine 3-dehydrogenase (340 aa).

Residue cysteine 38 participates in Zn(2+) binding. Catalysis depends on charge relay system residues threonine 40 and histidine 43. Histidine 63, glutamate 64, cysteine 93, cysteine 96, cysteine 99, and cysteine 107 together coordinate Zn(2+). Residues isoleucine 175, aspartate 195, arginine 200, 261–263 (LGI), and 285–286 (IY) contribute to the NAD(+) site.

Belongs to the zinc-containing alcohol dehydrogenase family. As to quaternary structure, homotetramer. The cofactor is Zn(2+).

The protein localises to the cytoplasm. The enzyme catalyses L-threonine + NAD(+) = (2S)-2-amino-3-oxobutanoate + NADH + H(+). It functions in the pathway amino-acid degradation; L-threonine degradation via oxydo-reductase pathway; glycine from L-threonine: step 1/2. Catalyzes the NAD(+)-dependent oxidation of L-threonine to 2-amino-3-ketobutyrate. The protein is L-threonine 3-dehydrogenase of Xanthomonas oryzae pv. oryzae (strain MAFF 311018).